The sequence spans 438 residues: ATP phosphoribosyltransferase regulatory subunit (438 aa).

Belongs to the class-II aminoacyl-tRNA synthetase family. HisZ subfamily. In terms of assembly, heteromultimer composed of HisG and HisZ subunits.

The protein localises to the cytoplasm. It functions in the pathway amino-acid biosynthesis; L-histidine biosynthesis; L-histidine from 5-phospho-alpha-D-ribose 1-diphosphate: step 1/9. Required for the first step of histidine biosynthesis. May allow the feedback regulation of ATP phosphoribosyltransferase activity by histidine. The chain is ATP phosphoribosyltransferase regulatory subunit from Geobacter sulfurreducens (strain ATCC 51573 / DSM 12127 / PCA).